We begin with the raw amino-acid sequence, 206 residues long: NADH-quinone oxidoreductase subunit C (206 aa).

It belongs to the complex I 30 kDa subunit family. As to quaternary structure, NDH-1 is composed of 14 different subunits. Subunits NuoB, C, D, E, F, and G constitute the peripheral sector of the complex.

Its subcellular location is the cell inner membrane. It catalyses the reaction a quinone + NADH + 5 H(+)(in) = a quinol + NAD(+) + 4 H(+)(out). NDH-1 shuttles electrons from NADH, via FMN and iron-sulfur (Fe-S) centers, to quinones in the respiratory chain. The immediate electron acceptor for the enzyme in this species is believed to be ubiquinone. Couples the redox reaction to proton translocation (for every two electrons transferred, four hydrogen ions are translocated across the cytoplasmic membrane), and thus conserves the redox energy in a proton gradient. The protein is NADH-quinone oxidoreductase subunit C of Nitrosomonas europaea (strain ATCC 19718 / CIP 103999 / KCTC 2705 / NBRC 14298).